We begin with the raw amino-acid sequence, 413 residues long: MSFYEELKWRNLIKDCSNETQVKELLDNNQVKFYCGFDPTSHSLTVGHLVQITMILLMQRQGHLPVILVGGATGLIGDPKETEERKLLSLENSLQNAKSIECQLKNILLNKQVEFVNNYQWLSQIDIISFLRNYGKLFNINYMLSKHAVAKRLASGISFTEFSYMILQSLDFHHLYKNHKVRLQLGGSDQWGNITSGLELIRKLEKKSDALGISTPLLLNSDGTKFGKSEKGVLWVNPSMTSPYEIYQYFLNVSDKEVINYLKMLTLIPKQEILELEKNTLENPQQRLAQKALTQNIITLIHSSDILQECIKTNQILFSNAKKESFQEKDFILLQKTLFCHSTKEDILLVDALVQTKLATSKSEAREFIKDNTIKLFNQKIKSLDFAITKKNTLFDKYVLLKKGKKNNALIVF.

Position 34 (Tyr-34) interacts with L-tyrosine. The 'HIGH' region motif lies at 39–48 (PTSHSLTVGH). Residues Tyr-164 and Gln-168 each contribute to the L-tyrosine site. A 'KMSKS' region motif is present at residues 225–229 (KFGKS). Lys-228 contacts ATP. Positions 347–413 (ILLVDALVQT…GKKNNALIVF (67 aa)) constitute an S4 RNA-binding domain.

Belongs to the class-I aminoacyl-tRNA synthetase family. TyrS type 1 subfamily. In terms of assembly, homodimer.

It localises to the cytoplasm. The catalysed reaction is tRNA(Tyr) + L-tyrosine + ATP = L-tyrosyl-tRNA(Tyr) + AMP + diphosphate + H(+). Functionally, catalyzes the attachment of tyrosine to tRNA(Tyr) in a two-step reaction: tyrosine is first activated by ATP to form Tyr-AMP and then transferred to the acceptor end of tRNA(Tyr). This chain is Tyrosine--tRNA ligase, found in Onion yellows phytoplasma (strain OY-M).